Consider the following 134-residue polypeptide: Transmembrane protein 100 (134 aa).

The next 2 helical transmembrane spans lie at 56–76 (CIIPFAVVVFIAGIVVTAVAY) and 84–104 (IISIFGLVVLSSGLFLLASSA). S121 bears the Phosphoserine mark.

In terms of assembly, interacts (via C-terminus) with TRPA1 and TRPV1. Interacts with TASOR. As to expression, expressed in neurons of the myenteric and submucosal plexuses in the gastric body, jejunum and proximal colon. Expressed in arterial endothelial cells and neurons of the central nervous system and peripheral nervous system. Expressed in umbilical artery endothelial cells (at protein level).

The protein resides in the cell membrane. It is found in the membrane. Its subcellular location is the perikaryon. The protein localises to the cytoplasm. It localises to the perinuclear region. The protein resides in the endoplasmic reticulum. Its function is as follows. Plays a role during embryonic arterial endothelium differentiation and vascular morphogenesis through the ACVRL1 receptor-dependent signaling pathway upon stimulation by bone morphogenetic proteins, such as GDF2/BMP9 and BMP10. Involved in the regulation of nociception, acting as a modulator of the interaction between TRPA1 and TRPV1, two molecular sensors and mediators of pain signals in dorsal root ganglia (DRG) neurons. Mechanistically, it weakens their interaction, thereby releasing the inhibition of TRPA1 by TRPV1 and increasing the single-channel open probability of the TRPA1-TRPV1 complex. This chain is Transmembrane protein 100 (TMEM100), found in Homo sapiens (Human).